A 353-amino-acid polypeptide reads, in one-letter code: 4-hydroxy-3-methylbut-2-en-1-yl diphosphate synthase (flavodoxin) (353 aa).

[4Fe-4S] cluster is bound by residues Cys-268, Cys-271, Cys-303, and Glu-310.

Belongs to the IspG family. [4Fe-4S] cluster is required as a cofactor.

It catalyses the reaction (2E)-4-hydroxy-3-methylbut-2-enyl diphosphate + oxidized [flavodoxin] + H2O + 2 H(+) = 2-C-methyl-D-erythritol 2,4-cyclic diphosphate + reduced [flavodoxin]. It functions in the pathway isoprenoid biosynthesis; isopentenyl diphosphate biosynthesis via DXP pathway; isopentenyl diphosphate from 1-deoxy-D-xylulose 5-phosphate: step 5/6. Converts 2C-methyl-D-erythritol 2,4-cyclodiphosphate (ME-2,4cPP) into 1-hydroxy-2-methyl-2-(E)-butenyl 4-diphosphate. This chain is 4-hydroxy-3-methylbut-2-en-1-yl diphosphate synthase (flavodoxin), found in Ruminiclostridium cellulolyticum (strain ATCC 35319 / DSM 5812 / JCM 6584 / H10) (Clostridium cellulolyticum).